The primary structure comprises 30 residues: Photosystem I reaction center subunit XII (30 aa).

Residues 7–29 form a helical membrane-spanning segment; the sequence is VYTVLLIALLASVLAIRLGSTLY.

Belongs to the PsaM family.

Its subcellular location is the plastid. The protein localises to the chloroplast thylakoid membrane. This Trieres chinensis (Marine centric diatom) protein is Photosystem I reaction center subunit XII.